The primary structure comprises 449 residues: UDP-N-acetylmuramoylalanine--D-glutamate ligase (449 aa).

Residue 119–125 (GSNGKTT) coordinates ATP.

This sequence belongs to the MurCDEF family.

The protein localises to the cytoplasm. The enzyme catalyses UDP-N-acetyl-alpha-D-muramoyl-L-alanine + D-glutamate + ATP = UDP-N-acetyl-alpha-D-muramoyl-L-alanyl-D-glutamate + ADP + phosphate + H(+). The protein operates within cell wall biogenesis; peptidoglycan biosynthesis. Functionally, cell wall formation. Catalyzes the addition of glutamate to the nucleotide precursor UDP-N-acetylmuramoyl-L-alanine (UMA). The chain is UDP-N-acetylmuramoylalanine--D-glutamate ligase from Streptococcus suis (strain 98HAH33).